The sequence spans 194 residues: MQGPRERMVVSAALLIRERGAHATAISDVLQHSGAPRGSAYHYFPGGRTQLLCEAVDYAGEHVAAMINEAEGGLELLDALIDKYRQQLLSTDFRAGCPIAAVSVEAGDEQDRERMAPVIARAAAVFDRWSDLTAQRFIADGIPPDRAHELAVLATSTLEGAILLARVRRDLTPLDLVHRQLRNLLLAELPERSR.

Residues 2 to 62 form the HTH tetR-type domain; sequence QGPRERMVVS…CEAVDYAGEH (61 aa). The H-T-H motif DNA-binding region spans 25 to 44; that stretch reads AISDVLQHSGAPRGSAYHYF.

This is an uncharacterized protein from Mycobacterium tuberculosis (strain CDC 1551 / Oshkosh).